We begin with the raw amino-acid sequence, 71 residues long: MVESTFEPKITAESVGQVIRAHLRVLKLTRKPSREEFLTIAKVAGVGILAVGAIGFIIYVLLTMLPQWVAQ.

A helical transmembrane segment spans residues 43-63; sequence VAGVGILAVGAIGFIIYVLLT.

Belongs to the SecE/SEC61-gamma family. Component of the Sec protein translocase complex. Heterotrimer consisting of SecY (alpha), SecG (beta) and SecE (gamma) subunits. The heterotrimers can form oligomers, although 1 heterotrimer is thought to be able to translocate proteins. Interacts with the ribosome. May interact with SecDF, and other proteins may be involved.

It is found in the cell membrane. Its function is as follows. Essential subunit of the Sec protein translocation channel SecYEG. Clamps together the 2 halves of SecY. May contact the channel plug during translocation. This chain is Protein translocase subunit SecE, found in Methanosarcina barkeri (strain Fusaro / DSM 804).